The sequence spans 466 residues: Soluble pyridine nucleotide transhydrogenase (466 aa).

Residue 36 to 45 (ERYNNVGGGC) participates in FAD binding.

This sequence belongs to the class-I pyridine nucleotide-disulfide oxidoreductase family. FAD serves as cofactor.

Its subcellular location is the cytoplasm. It catalyses the reaction NAD(+) + NADPH = NADH + NADP(+). Its function is as follows. Conversion of NADPH, generated by peripheral catabolic pathways, to NADH, which can enter the respiratory chain for energy generation. In Yersinia pseudotuberculosis serotype O:1b (strain IP 31758), this protein is Soluble pyridine nucleotide transhydrogenase.